Here is a 121-residue protein sequence, read N- to C-terminus: Phospholipase A2 homolog EPL_00195 (121 aa).

Disulfide bonds link Cys25–Cys114, Cys27–Cys43, Cys42–Cys94, Cys48–Cys121, Cys49–Cys87, Cys56–Cys80, and Cys74–Cys85. Positions 104-116 are important for membrane-damaging activities in eukaryotes and bacteria; heparin-binding; the sequence is KKYRIYPNFLCRG.

Belongs to the phospholipase A2 family. Group II subfamily. S49 sub-subfamily. In terms of assembly, monomer. In terms of tissue distribution, expressed by the venom gland.

Its subcellular location is the secreted. Functionally, snake venom phospholipase A2 homolog that lacks enzymatic activity. Shows high myotoxin activities and displays edema-inducing activities. Has cytotoxic activities against HUVEC cells (LC(50)=2.5 uL) and human lung adenocarcinoma A549 cells (LC(50)=2.9 uL). In Echis pyramidum leakeyi (Leakey's carpet viper), this protein is Phospholipase A2 homolog EPL_00195.